A 1103-amino-acid polypeptide reads, in one-letter code: Bifunctional cytochrome P450/NADPH--P450 reductase (1103 aa).

The interval methionine 1–alanine 491 is cytochrome P450. Position 415 (cysteine 415) interacts with heme. Positions glycine 492–alanine 1103 are NADPH--P450 reductase. Residues methionine 508–phenylalanine 649 form the Flavodoxin-like domain. FMN contacts are provided by residues serine 514 to cysteine 519, serine 561 to glycine 564, cysteine 596, and threonine 604. Residues leucine 685–proline 924 form the FAD-binding FR-type domain.

The protein in the N-terminal section; belongs to the cytochrome P450 family. Heme serves as cofactor. Requires FAD as cofactor. The cofactor is FMN.

It carries out the reaction 2 oxidized [cytochrome P450] + NADPH = 2 reduced [cytochrome P450] + NADP(+) + H(+). The catalysed reaction is an organic molecule + reduced [NADPH--hemoprotein reductase] + O2 = an alcohol + oxidized [NADPH--hemoprotein reductase] + H2O + H(+). In terms of biological role, functions as a fatty acid monooxygenase. Also displays a NADPH-dependent reductase activity in the C-terminal domain, which allows electron transfer from NADPH to the heme iron of the cytochrome P450 N-terminal domain. The protein is Bifunctional cytochrome P450/NADPH--P450 reductase of Aspergillus oryzae (strain ATCC 42149 / RIB 40) (Yellow koji mold).